The following is a 161-amino-acid chain: Endoribonuclease YbeY (161 aa).

Residues histidine 120, histidine 124, and aspartate 130 each coordinate Zn(2+).

Belongs to the endoribonuclease YbeY family. Requires Zn(2+) as cofactor.

It is found in the cytoplasm. Its function is as follows. Single strand-specific metallo-endoribonuclease involved in late-stage 70S ribosome quality control and in maturation of the 3' terminus of the 16S rRNA. This chain is Endoribonuclease YbeY, found in Chlamydia trachomatis serovar A (strain ATCC VR-571B / DSM 19440 / HAR-13).